A 417-amino-acid polypeptide reads, in one-letter code: Adenylosuccinate synthetase (417 aa).

Residues 11–17 (GDEGKGK) and 39–41 (GHT) contribute to the GTP site. Asp12 functions as the Proton acceptor in the catalytic mechanism. Residues Asp12 and Gly39 each coordinate Mg(2+). IMP contacts are provided by residues 12–15 (DEGK), 37–40 (NAGH), Thr126, Arg140, Gln218, Thr233, and Arg295. His40 (proton donor) is an active-site residue. 291–297 (TVSGRIR) serves as a coordination point for substrate. GTP is bound by residues Arg297, 323–325 (KLD), and 406–408 (SNG).

It belongs to the adenylosuccinate synthetase family. Homodimer. The cofactor is Mg(2+).

Its subcellular location is the cytoplasm. The enzyme catalyses IMP + L-aspartate + GTP = N(6)-(1,2-dicarboxyethyl)-AMP + GDP + phosphate + 2 H(+). Its pathway is purine metabolism; AMP biosynthesis via de novo pathway; AMP from IMP: step 1/2. In terms of biological role, plays an important role in the de novo pathway of purine nucleotide biosynthesis. Catalyzes the first committed step in the biosynthesis of AMP from IMP. The protein is Adenylosuccinate synthetase of Neorickettsia sennetsu (strain ATCC VR-367 / Miyayama) (Ehrlichia sennetsu).